The chain runs to 435 residues: Glutamate-1-semialdehyde 2,1-aminomutase (435 aa).

An N6-(pyridoxal phosphate)lysine modification is found at Lys266.

Belongs to the class-III pyridoxal-phosphate-dependent aminotransferase family. HemL subfamily. As to quaternary structure, homodimer. Requires pyridoxal 5'-phosphate as cofactor.

Its subcellular location is the cytoplasm. It carries out the reaction (S)-4-amino-5-oxopentanoate = 5-aminolevulinate. It functions in the pathway porphyrin-containing compound metabolism; protoporphyrin-IX biosynthesis; 5-aminolevulinate from L-glutamyl-tRNA(Glu): step 2/2. This Nitrosomonas europaea (strain ATCC 19718 / CIP 103999 / KCTC 2705 / NBRC 14298) protein is Glutamate-1-semialdehyde 2,1-aminomutase.